The primary structure comprises 359 residues: ATP-dependent (S)-NAD(P)H-hydrate dehydratase (359 aa).

In terms of domain architecture, YjeF C-terminal spans 61 to 350; it reads LLEEARKVVP…SEINSVFVNN (290 aa). (6S)-NADPHX is bound by residues G161 and 214–220; that span reads NVVEFQR. Residues 256–260 and 275–284 each bind ATP; these read KGEVD and GSPRRCGGQG. D285 is a binding site for (6S)-NADPHX.

This sequence belongs to the NnrD/CARKD family. Mg(2+) is required as a cofactor.

It catalyses the reaction (6S)-NADHX + ATP = ADP + phosphate + NADH + H(+). The catalysed reaction is (6S)-NADPHX + ATP = ADP + phosphate + NADPH + H(+). Its function is as follows. Catalyzes the dehydration of the S-form of NAD(P)HX at the expense of ATP, which is converted to ADP. Together with NAD(P)HX epimerase, which catalyzes the epimerization of the S- and R-forms, the enzyme allows the repair of both epimers of NAD(P)HX, a damaged form of NAD(P)H that is a result of enzymatic or heat-dependent hydration. In Ciona intestinalis (Transparent sea squirt), this protein is ATP-dependent (S)-NAD(P)H-hydrate dehydratase.